Reading from the N-terminus, the 487-residue chain is N-succinylglutamate 5-semialdehyde dehydrogenase (487 aa).

Gly221–Gly226 provides a ligand contact to NAD(+). Catalysis depends on residues Glu244 and Cys278.

The protein belongs to the aldehyde dehydrogenase family. AstD subfamily.

It carries out the reaction N-succinyl-L-glutamate 5-semialdehyde + NAD(+) + H2O = N-succinyl-L-glutamate + NADH + 2 H(+). The protein operates within amino-acid degradation; L-arginine degradation via AST pathway; L-glutamate and succinate from L-arginine: step 4/5. Catalyzes the NAD-dependent reduction of succinylglutamate semialdehyde into succinylglutamate. This is N-succinylglutamate 5-semialdehyde dehydrogenase from Burkholderia ambifaria (strain ATCC BAA-244 / DSM 16087 / CCUG 44356 / LMG 19182 / AMMD) (Burkholderia cepacia (strain AMMD)).